We begin with the raw amino-acid sequence, 419 residues long: Histidine--tRNA ligase (419 aa).

This sequence belongs to the class-II aminoacyl-tRNA synthetase family. In terms of assembly, homodimer.

The protein resides in the cytoplasm. It carries out the reaction tRNA(His) + L-histidine + ATP = L-histidyl-tRNA(His) + AMP + diphosphate + H(+). This chain is Histidine--tRNA ligase, found in Syntrophotalea carbinolica (strain DSM 2380 / NBRC 103641 / GraBd1) (Pelobacter carbinolicus).